Consider the following 196-residue polypeptide: ATP-dependent Clp protease proteolytic subunit (196 aa).

The Nucleophile role is filled by serine 101. Residue histidine 126 is part of the active site.

Belongs to the peptidase S14 family. Component of the chloroplastic Clp protease core complex.

It is found in the plastid. It localises to the chloroplast stroma. It carries out the reaction Hydrolysis of proteins to small peptides in the presence of ATP and magnesium. alpha-casein is the usual test substrate. In the absence of ATP, only oligopeptides shorter than five residues are hydrolyzed (such as succinyl-Leu-Tyr-|-NHMec, and Leu-Tyr-Leu-|-Tyr-Trp, in which cleavage of the -Tyr-|-Leu- and -Tyr-|-Trp bonds also occurs).. Cleaves peptides in various proteins in a process that requires ATP hydrolysis. Has a chymotrypsin-like activity. Plays a major role in the degradation of misfolded proteins. The sequence is that of ATP-dependent Clp protease proteolytic subunit from Gossypium hirsutum (Upland cotton).